The following is a 255-amino-acid chain: 1-(5-phosphoribosyl)-5-[(5-phosphoribosylamino)methylideneamino] imidazole-4-carboxamide isomerase (255 aa).

The active-site Proton acceptor is D8. D129 acts as the Proton donor in catalysis.

It belongs to the HisA/HisF family.

The protein resides in the cytoplasm. The catalysed reaction is 1-(5-phospho-beta-D-ribosyl)-5-[(5-phospho-beta-D-ribosylamino)methylideneamino]imidazole-4-carboxamide = 5-[(5-phospho-1-deoxy-D-ribulos-1-ylimino)methylamino]-1-(5-phospho-beta-D-ribosyl)imidazole-4-carboxamide. The protein operates within amino-acid biosynthesis; L-histidine biosynthesis; L-histidine from 5-phospho-alpha-D-ribose 1-diphosphate: step 4/9. This Synechococcus sp. (strain CC9605) protein is 1-(5-phosphoribosyl)-5-[(5-phosphoribosylamino)methylideneamino] imidazole-4-carboxamide isomerase.